Reading from the N-terminus, the 1008-residue chain is DNA polymerase catalytic subunit (1008 aa).

This sequence belongs to the DNA polymerase type-B family.

The protein localises to the host nucleus. The catalysed reaction is DNA(n) + a 2'-deoxyribonucleoside 5'-triphosphate = DNA(n+1) + diphosphate. In Equine herpesvirus 2 (strain 86/87) (EHV-2), this protein is DNA polymerase catalytic subunit (9).